Consider the following 315-residue polypeptide: L-lactate dehydrogenase (315 aa).

V14, D35, and Y66 together coordinate NAD(+). Residues Q83, R89, and 121-124 contribute to the substrate site; that span reads NPVD. NAD(+) contacts are provided by residues 119 to 121 and S144; that span reads VAN. Substrate is bound at residue 149–152; it reads DTAR. H176 serves as the catalytic Proton acceptor. Phosphotyrosine is present on Y221. T230 is a substrate binding site.

This sequence belongs to the LDH/MDH superfamily. LDH family. In terms of assembly, homotetramer.

It is found in the cytoplasm. The catalysed reaction is (S)-lactate + NAD(+) = pyruvate + NADH + H(+). It participates in fermentation; pyruvate fermentation to lactate; (S)-lactate from pyruvate: step 1/1. Catalyzes the conversion of lactate to pyruvate. The polypeptide is L-lactate dehydrogenase (Mesomycoplasma hyopneumoniae (strain 7448) (Mycoplasma hyopneumoniae)).